The primary structure comprises 655 residues: Probable alpha-galactosidase D (655 aa).

An N-terminal signal peptide occupies residues 1-16; that stretch reads MLPKIFYLSLLPAALG. 2 N-linked (GlcNAc...) asparagine glycosylation sites follow: asparagine 47 and asparagine 91. Cysteine 124 and cysteine 155 are disulfide-bonded. The active-site Nucleophile is the aspartate 153. 2 N-linked (GlcNAc...) asparagine glycosylation sites follow: asparagine 180 and asparagine 189. 198 to 202 is a binding site for substrate; it reads EWGID. The active-site Proton donor is aspartate 220. Residues asparagine 349, asparagine 436, asparagine 458, asparagine 503, asparagine 537, asparagine 541, and asparagine 580 are each glycosylated (N-linked (GlcNAc...) asparagine).

Belongs to the glycosyl hydrolase 27 family.

Its subcellular location is the secreted. It catalyses the reaction Hydrolysis of terminal, non-reducing alpha-D-galactose residues in alpha-D-galactosides, including galactose oligosaccharides, galactomannans and galactolipids.. Its function is as follows. Hydrolyzes a variety of simple alpha-D-galactoside as well as more complex molecules such as oligosaccharides and polysaccharides. This Aspergillus flavus (strain ATCC 200026 / FGSC A1120 / IAM 13836 / NRRL 3357 / JCM 12722 / SRRC 167) protein is Probable alpha-galactosidase D (aglD).